The following is a 425-amino-acid chain: Serine--tRNA ligase (425 aa).

230–232 (TAE) serves as a coordination point for L-serine. 261–263 (RSE) is a binding site for ATP. An L-serine-binding site is contributed by Glu-284. Position 348–351 (348–351 (EISS)) interacts with ATP. L-serine is bound at residue Ser-384.

The protein belongs to the class-II aminoacyl-tRNA synthetase family. Type-1 seryl-tRNA synthetase subfamily. As to quaternary structure, homodimer. The tRNA molecule binds across the dimer.

The protein localises to the cytoplasm. The catalysed reaction is tRNA(Ser) + L-serine + ATP = L-seryl-tRNA(Ser) + AMP + diphosphate + H(+). It carries out the reaction tRNA(Sec) + L-serine + ATP = L-seryl-tRNA(Sec) + AMP + diphosphate + H(+). It functions in the pathway aminoacyl-tRNA biosynthesis; selenocysteinyl-tRNA(Sec) biosynthesis; L-seryl-tRNA(Sec) from L-serine and tRNA(Sec): step 1/1. Its function is as follows. Catalyzes the attachment of serine to tRNA(Ser). Is also able to aminoacylate tRNA(Sec) with serine, to form the misacylated tRNA L-seryl-tRNA(Sec), which will be further converted into selenocysteinyl-tRNA(Sec). This is Serine--tRNA ligase from Streptococcus pyogenes serotype M2 (strain MGAS10270).